Here is a 128-residue protein sequence, read N- to C-terminus: Aspartate 1-decarboxylase (128 aa).

Serine 25 (schiff-base intermediate with substrate; via pyruvic acid) is an active-site residue. At serine 25 the chain carries Pyruvic acid (Ser). Threonine 57 contributes to the substrate binding site. The Proton donor role is filled by tyrosine 58. 73 to 75 (GAA) serves as a coordination point for substrate.

Belongs to the PanD family. In terms of assembly, heterooctamer of four alpha and four beta subunits. Requires pyruvate as cofactor. In terms of processing, is synthesized initially as an inactive proenzyme, which is activated by self-cleavage at a specific serine bond to produce a beta-subunit with a hydroxyl group at its C-terminus and an alpha-subunit with a pyruvoyl group at its N-terminus.

It is found in the cytoplasm. The enzyme catalyses L-aspartate + H(+) = beta-alanine + CO2. It participates in cofactor biosynthesis; (R)-pantothenate biosynthesis; beta-alanine from L-aspartate: step 1/1. Its function is as follows. Catalyzes the pyruvoyl-dependent decarboxylation of aspartate to produce beta-alanine. The chain is Aspartate 1-decarboxylase from Caldicellulosiruptor saccharolyticus (strain ATCC 43494 / DSM 8903 / Tp8T 6331).